An 89-amino-acid polypeptide reads, in one-letter code: Small ribosomal subunit protein uS15 (89 aa).

Belongs to the universal ribosomal protein uS15 family. Part of the 30S ribosomal subunit. Forms a bridge to the 50S subunit in the 70S ribosome, contacting the 23S rRNA.

Its function is as follows. One of the primary rRNA binding proteins, it binds directly to 16S rRNA where it helps nucleate assembly of the platform of the 30S subunit by binding and bridging several RNA helices of the 16S rRNA. Forms an intersubunit bridge (bridge B4) with the 23S rRNA of the 50S subunit in the ribosome. This is Small ribosomal subunit protein uS15 from Streptococcus uberis (strain ATCC BAA-854 / 0140J).